Consider the following 359-residue polypeptide: 3-dehydroquinate synthase (359 aa).

NAD(+) contacts are provided by residues 69–74 (DAETGK), 103–107 (GAATD), 127–128 (TT), K140, and K149. Zn(2+)-binding residues include E182, H244, and H260.

The protein belongs to the sugar phosphate cyclases superfamily. Dehydroquinate synthase family. It depends on Co(2+) as a cofactor. Zn(2+) is required as a cofactor. NAD(+) serves as cofactor.

The protein resides in the cytoplasm. It carries out the reaction 7-phospho-2-dehydro-3-deoxy-D-arabino-heptonate = 3-dehydroquinate + phosphate. Its pathway is metabolic intermediate biosynthesis; chorismate biosynthesis; chorismate from D-erythrose 4-phosphate and phosphoenolpyruvate: step 2/7. Catalyzes the conversion of 3-deoxy-D-arabino-heptulosonate 7-phosphate (DAHP) to dehydroquinate (DHQ). In Corynebacterium diphtheriae (strain ATCC 700971 / NCTC 13129 / Biotype gravis), this protein is 3-dehydroquinate synthase.